The primary structure comprises 266 residues: tRNA dimethylallyltransferase (266 aa).

This sequence belongs to the IPP transferase family. In terms of assembly, monomer. It depends on Mg(2+) as a cofactor.

It carries out the reaction adenosine(37) in tRNA + dimethylallyl diphosphate = N(6)-dimethylallyladenosine(37) in tRNA + diphosphate. Its function is as follows. Catalyzes the transfer of a dimethylallyl group onto the adenine at position 37 in tRNAs that read codons beginning with uridine, leading to the formation of N6-(dimethylallyl)adenosine (i(6)A). The protein is tRNA dimethylallyltransferase (miaA) of Helicobacter acinonychis (strain Sheeba).